Reading from the N-terminus, the 120-residue chain is Ribosome-binding factor A (120 aa).

It belongs to the RbfA family. In terms of assembly, monomer. Binds 30S ribosomal subunits, but not 50S ribosomal subunits or 70S ribosomes.

Its subcellular location is the cytoplasm. In terms of biological role, one of several proteins that assist in the late maturation steps of the functional core of the 30S ribosomal subunit. Associates with free 30S ribosomal subunits (but not with 30S subunits that are part of 70S ribosomes or polysomes). Required for efficient processing of 16S rRNA. May interact with the 5'-terminal helix region of 16S rRNA. The chain is Ribosome-binding factor A from Lactobacillus delbrueckii subsp. bulgaricus (strain ATCC 11842 / DSM 20081 / BCRC 10696 / JCM 1002 / NBRC 13953 / NCIMB 11778 / NCTC 12712 / WDCM 00102 / Lb 14).